The chain runs to 161 residues: Cystatin cpi-2 (161 aa).

An N-terminal signal peptide occupies residues 1–25 (MMSTMSIKEGLLVILLSLFLFDTTA). The Important for interaction with host LGMN motif lies at 76–78 (SND). The N-linked (GlcNAc...) asparagine glycan is linked to asparagine 89. Residues 93-97 (QVVAG) carry the Secondary area of contact motif. A disulfide bridge links cysteine 111 with cysteine 124.

It belongs to the cystatin family.

Its function is as follows. Cysteine protease inhibitor which inhibits members of the peptidase C1 family. Also acts as an asparaginyl endopeptidase inhibitor. In the human host, inhibits CTSL/cathepsin L, CTSS/cathepsin S, CTSB/cathepsin B and asparaginyl endopeptidase LGMN/AEP which may cause defects in both antigen and MHC class II invariant chain CD74/Ii processing. This chain is Cystatin cpi-2, found in Brugia malayi (Filarial nematode worm).